Here is a 168-residue protein sequence, read N- to C-terminus: Ribosome maturation factor RimM (168 aa).

The 74-residue stretch at 95-168 folds into the PRC barrel domain; the sequence is KEGDYYWTDL…IIVVEWDADF (74 aa).

This sequence belongs to the RimM family. As to quaternary structure, binds ribosomal protein uS19.

The protein resides in the cytoplasm. In terms of biological role, an accessory protein needed during the final step in the assembly of 30S ribosomal subunit, possibly for assembly of the head region. Essential for efficient processing of 16S rRNA. May be needed both before and after RbfA during the maturation of 16S rRNA. It has affinity for free ribosomal 30S subunits but not for 70S ribosomes. In Coxiella burnetii (strain CbuK_Q154) (Coxiella burnetii (strain Q154)), this protein is Ribosome maturation factor RimM.